A 404-amino-acid chain; its full sequence is Dihydrolipoyllysine-residue acetyltransferase component of pyruvate dehydrogenase complex (404 aa).

The Lipoyl-binding domain occupies 2–78 (PIKILMPALS…PVNSLIAVLS (77 aa)). K43 is subject to N6-lipoyllysine. The region spanning 128–165 (FASPLAKRLAKIRNIRLESVQGSGPHGRIVKQDILSYS) is the Peripheral subunit-binding (PSBD) domain. Residue H377 is part of the active site.

Belongs to the 2-oxoacid dehydrogenase family. As to quaternary structure, forms a 24-polypeptide structural core with octahedral symmetry. The cofactor is (R)-lipoate.

The catalysed reaction is N(6)-[(R)-dihydrolipoyl]-L-lysyl-[protein] + acetyl-CoA = N(6)-[(R)-S(8)-acetyldihydrolipoyl]-L-lysyl-[protein] + CoA. The pyruvate dehydrogenase complex catalyzes the overall conversion of pyruvate to acetyl-CoA and CO(2). It contains multiple copies of three enzymatic components: pyruvate dehydrogenase (E1), dihydrolipoamide acetyltransferase (E2) and lipoamide dehydrogenase (E3). The sequence is that of Dihydrolipoyllysine-residue acetyltransferase component of pyruvate dehydrogenase complex (pdhC) from Rickettsia typhi (strain ATCC VR-144 / Wilmington).